The sequence spans 214 residues: Ras-related protein Rab2BV (214 aa).

Glycine 19–serine 26 is a GTP binding site. The Effector region motif lies at serine 41–phenylalanine 49. GTP-binding positions include aspartate 67–glutamine 71 and asparagine 125–aspartate 128. Residues cysteine 211 and cysteine 212 are each lipidated (S-geranylgeranyl cysteine).

This sequence belongs to the small GTPase superfamily. Rab family.

The protein resides in the cell membrane. The polypeptide is Ras-related protein Rab2BV (RAB2BV) (Beta vulgaris (Sugar beet)).